Reading from the N-terminus, the 248-residue chain is 2,3-bisphosphoglycerate-dependent phosphoglycerate mutase (248 aa).

Substrate is bound by residues 8–15, 21–22, arginine 60, 87–90, lysine 98, 114–115, and 183–184; these read RHGESTWN, TG, ERHY, RR, and GN. Histidine 9 serves as the catalytic Tele-phosphohistidine intermediate. Glutamate 87 acts as the Proton donor/acceptor in catalysis.

The protein belongs to the phosphoglycerate mutase family. BPG-dependent PGAM subfamily. Homodimer.

It catalyses the reaction (2R)-2-phosphoglycerate = (2R)-3-phosphoglycerate. It participates in carbohydrate degradation; glycolysis; pyruvate from D-glyceraldehyde 3-phosphate: step 3/5. Its function is as follows. Catalyzes the interconversion of 2-phosphoglycerate and 3-phosphoglycerate. The sequence is that of 2,3-bisphosphoglycerate-dependent phosphoglycerate mutase from Burkholderia lata (strain ATCC 17760 / DSM 23089 / LMG 22485 / NCIMB 9086 / R18194 / 383).